A 329-amino-acid polypeptide reads, in one-letter code: Cathepsin K (329 aa).

An N-terminal signal peptide occupies residues 1–15 (MWVFKFLLLPVVSFA). A propeptide spans 16 to 114 (LSPEETLDTQ…TLYTPEWEGR (99 aa)) (activation peptide). Asn103 carries an N-linked (GlcNAc...) asparagine glycan. 2 disulfide bridges follow: Cys136/Cys177 and Cys170/Cys210. Cys139 is an active-site residue. N-linked (GlcNAc...) asparagine glycosylation is present at Asn213. An intrachain disulfide couples Cys269 to Cys318. Active-site residues include His276 and Asn296.

This sequence belongs to the peptidase C1 family.

It localises to the lysosome. The protein localises to the secreted. It is found in the apical cell membrane. The enzyme catalyses Broad proteolytic activity. With small-molecule substrates and inhibitors, the major determinant of specificity is P2, which is preferably Leu, Met &gt; Phe, and not Arg.. Functionally, thiol protease involved in osteoclastic bone resorption and may participate partially in the disorder of bone remodeling. Displays potent endoprotease activity against fibrinogen at acid pH. May play an important role in extracellular matrix degradation. Involved in the release of thyroid hormone thyroxine (T4) by limited proteolysis of TG/thyroglobulin in the thyroid follicle lumen. The protein is Cathepsin K (Ctsk) of Rattus norvegicus (Rat).